A 523-amino-acid polypeptide reads, in one-letter code: Apoptosis inhibitor 5 (523 aa).

The interval 1–360 (MPTVEELYRN…HQLGRKLPDF (360 aa)) is ARM-like and Heat-like helical repeats. The disordered stretch occupies residues 446–523 (VQKADANQKR…RGNRSRGRIY (78 aa)). Positions 454–475 (KRTSEDTTSSSPPKKASAGPKR) match the Nuclear localization signal motif. Low complexity predominate over residues 460-471 (TTSSSPPKKASA). Over residues 487–497 (KYSSNLGSFSY) the composition is skewed to polar residues. Gly residues predominate over residues 502-515 (GFRGGRGRGWGGRG).

It belongs to the API5 family. As to quaternary structure, monomer.

It is found in the nucleus. Its subcellular location is the cytoplasm. Functionally, antiapoptotic factor that may have a role in protein assembly. This chain is Apoptosis inhibitor 5 (API5), found in Gallus gallus (Chicken).